The sequence spans 317 residues: uncharacterized protein (317 aa).

Residues 29–86 (IDLNLLTIFEAVYVHKGIVNAAKVLNLTPSAISQSIQKLRVIFPDPLFIRKGQGVTPT) enclose the HTH lysR-type domain. The segment at residues 46-65 (IVNAAKVLNLTPSAISQSIQ) is a DNA-binding region (H-T-H motif).

Belongs to the LysR transcriptional regulatory family.

This is an uncharacterized protein from Escherichia coli (strain K12).